The sequence spans 443 residues: Threonine/serine transporter TdcC (443 aa).

The next 11 helical transmembrane spans lie at 22-42 (TTWT…FFPI), 44-64 (AGFG…PIAF), 97-117 (GVVI…IYGV), 140-160 (FVAL…KDLM), 163-183 (VMSY…LSLI), 207-227 (ILVT…FSPI), 259-279 (ASML…FTLS), 319-339 (ASII…LGTL), 366-386 (ISMI…PNIL), 389-409 (IEAM…MYAI), and 423-443 (DNVF…YKLF).

It belongs to the amino acid/polyamine transporter 2 family. SdaC/TdcC subfamily.

The protein localises to the cell inner membrane. The catalysed reaction is L-threonine(in) + H(+)(in) = L-threonine(out) + H(+)(out). It catalyses the reaction L-serine(in) + H(+)(in) = L-serine(out) + H(+)(out). Its function is as follows. Involved in the import of threonine and serine into the cell, with the concomitant import of a proton (symport system). This chain is Threonine/serine transporter TdcC, found in Salmonella paratyphi B (strain ATCC BAA-1250 / SPB7).